The chain runs to 299 residues: Putative ankyrin repeat protein R864 (299 aa).

7 ANK repeats span residues Ser-78–Ser-107, Asn-108–Ser-137, Asn-139–Ser-167, Asn-168–Ser-197, Tyr-199–Ala-227, Tyr-228–Asn-257, and Asp-258–Thr-287.

This Acanthamoeba polyphaga mimivirus (APMV) protein is Putative ankyrin repeat protein R864.